A 1199-amino-acid chain; its full sequence is MLDVNKFEYMKIGLASPEKIRSWSYGEVKKPETINYRTLKPEKDGLFCERIFGPTKDWECHCGKYKRVRYKGVVCDRCGVEVTRSKVRRERMGHIELAAPVSHIWYFKGIPSRMGLVLDMSPRALEEVIYFASYVVTDPGDTPLEKKQLLSEKEYRAYREKYGQSFQASMGAEAIKKLLQDIDLDKEVAALKEELKTAQGQRRARIIKRLEVLEAFRSSGNDPAWMVLDVLPVIPPELRPMVQLDGGRFATSDLNDLYRRVINRNNRLKRLLDLGAPNIIVQNEKRMLQEAVDALIDNGRRGRPVTGPGNRPLKSLSHMLKGKQGRFRQNLLGKRVDYSGRSVIVVGPNLKMYQCGLPKEMALELFKPFVMKELVERGLAHNIKSAKRKIERVHPEVWDVLEDVIKEHPVLLNRAPTLHRLGIQAFEPTLVEGRAIRLHPLVCTAYNADFDGDQMAVHVPLSAEAQAEARLLMLAAQNILNPKDGKPVVTPSQDMVLGNYYLTMEREGAIGEGMVFKDTDEALLAYHNGYVHLHSRIAIHAGSLKNETFTEEQNNKLLLTTVGKLIFNEILPNSFPYINEPTTENIEGRTPDKYFLDKGVNVREEIRKRELVPPFKKKVLGQIIAEVFKRFKITETSKMLDRMKDLGFQYSTKAGITIGVADIVVLPEKQEILDEAQAKVDTVLKQFRRGLITDEERYERVISIWSAAKDKIQDRLMKSLDKRNPIFMMSDSGARGNASNFTQLAGMRGLMANPAGRIIELPIKSSFREGLTVLEYFISTHGARKGLADTALKTADSGYLTRRLVDVAQDVIVREEDCGTDRGILARALTDGTEVVVKLEERLVGRYAHKTVRHPETGEVIVRKDEMITEDIANEIMKAGITEVWIRSVFACNTRHGVCKKCYGRNMATGMDVEVGEAVGIIAAQSIGEPGTQLTMRTFHTGGVAGDDITQGLPRVQELFEARNPKGQAVISEIDGTVISINKTRDNQYEVVVQGEVETRTYVAPYNARLKVEEGQRVERGQELTEGSVDPKQLLRVRDITSVQEYLLREVQKVYRMQGVEISDKHIEVMVRQMLRKVRVIDAGDTDVLPGTLLDVHQFTDVNAKALREGKRPATARQVLLGITKASLETDSFLSAASFQETTRVLTDAAIKGKRDELLGLKENVIIGKLVPAGTGMARYRKVKPAVKKETASDTVSSK.

Positions 60, 62, 75, and 78 each coordinate Zn(2+). Residues D449, D451, and D453 each coordinate Mg(2+). Residues C818, C892, C899, and C902 each coordinate Zn(2+).

Belongs to the RNA polymerase beta' chain family. As to quaternary structure, the RNAP catalytic core consists of 2 alpha, 1 beta, 1 beta' and 1 omega subunit. When a sigma factor is associated with the core the holoenzyme is formed, which can initiate transcription. Mg(2+) is required as a cofactor. Zn(2+) serves as cofactor.

It carries out the reaction RNA(n) + a ribonucleoside 5'-triphosphate = RNA(n+1) + diphosphate. Its function is as follows. DNA-dependent RNA polymerase catalyzes the transcription of DNA into RNA using the four ribonucleoside triphosphates as substrates. This Geobacillus kaustophilus (strain HTA426) protein is DNA-directed RNA polymerase subunit beta'.